A 524-amino-acid polypeptide reads, in one-letter code: Calcium-dependent protein kinase 1 (524 aa).

The disordered stretch occupies residues 1–34 (MGCSQSSNVKDFKTRRSKFTNGNNYGKSGNNKNS). Residue Gly-2 is the site of N-myristoyl glycine attachment. Cys-3 carries S-palmitoyl cysteine lipidation. Residues 10–20 (KDFKTRRSKFT) carry the Basic cluster involved in membrane binding motif. Phosphoserine; by autocatalysis occurs at positions 17, 28, and 34. The span at 21-32 (NGNNYGKSGNNK) shows a compositional bias: low complexity. In terms of domain architecture, Protein kinase spans 56–325 (YFKVRKLGSG…AKEALNSKWI (270 aa)). Residues 62–70 (LGSGAYGEV) and Lys-85 contribute to the ATP site. Ser-64 carries the post-translational modification Phosphoserine; by PKG; by autocatalysis. Position 100 is a phosphothreonine; by autocatalysis (Thr-100). The residue at position 118 (Ser-118) is a Phosphoserine; by autocatalysis. Asp-191 functions as the Proton acceptor in the catalytic mechanism. Residue Ser-217 is modified to Phosphoserine. Ser-220 bears the Phosphoserine; by autocatalysis mark. Thr-231 carries the post-translational modification Phosphothreonine; by PKG; by autocatalysis. Position 335 is a phosphoserine; by autocatalysis (Ser-335). Residues 346–353 (NMRKFEGS) carry the J domain autoinhibitory motif motif. The interval 346–364 (NMRKFEGSQKLAQAAILFI) is j domain. The short motif at 354–364 (QKLAQAAILFI) is the J domain interacts with the EF-hand domains element. 4 EF-hand domains span residues 372–407 (EERK…LRSF), 416–451 (NVEE…KQIL), 452–487 (FSEE…TSIS), and 488–521 (EQMW…ICDN). Ca(2+) contacts are provided by Asp-385, Asn-387, Asp-389, Gln-391, Glu-396, Asp-429, Asp-431, Asn-433, Tyr-435, Glu-440, Asp-465, Asp-467, Ser-469, Lys-471, Glu-476, Asp-499, Asn-501, Asp-503, Met-505, and Glu-510.

The protein belongs to the protein kinase superfamily. Ser/Thr protein kinase family. CDPK subfamily. Monomer. Forms a high molecular weight (250 and 400 kDa) complex. Forms a complex composed of CDPK1, PKA regulatory subunit PKAr and 14-3-3I; the complex is formed in merozoites in response to low extracellular level of K(+) and may play a role in microneme secretion. Interacts (when phosphorylated) with 14-3-3I in a Ca(2+)-independent manner; the interaction does not regulate CDPK1 catalytic activity but is required for merozoite invasion of host erythrocytes. Interacts with PKA regulatory subunit PKAr; in a Ca(2+)-dependent manner. Interacts with SERA5 p50 in the late schizont stage. Interacts with inner membrane complex protein IMC1g in late schizonts. Interacts with rhoptry protein RhopH3 in merozoites. Requires Mg(2+) as cofactor. In terms of processing, myristoylated. Myristoylation, palmitoylation and the basic cluster motif are required for the localization to the parasitophorous vacuole membrane. Palmitoylated. Palmitoylation increases in merozoites in response to low level of extracellular K(+) in the host blood. Myristoylation, palmitoylation and the basic cluster motif are required for the localization to the parasitophorous vacuole membrane. Post-translationally, phosphorylation at Ser-64 occurs at late schizont stage and regulates CDPK1 protein-protein interaction. Phosphorylated at Ser-28, Ser-34 and Ser-64 in merozoites in response to low extracellular level of K(+). Phosphorylation at Thr-231 may regulate CDPK1 kinase activity. Phosphorylation increases in response to an increase in intracellular Ca(2+) levels. Autophosphorylated in vitro. Autophosphorylation does not affect membrane localization in vitro.

Its subcellular location is the membrane. It is found in the cell membrane. The protein localises to the parasitophorous vacuole membrane. The protein resides in the cytoplasm. It localises to the cell projection. Its subcellular location is the cilium. It is found in the flagellum. The protein localises to the host cell membrane. The catalysed reaction is L-seryl-[protein] + ATP = O-phospho-L-seryl-[protein] + ADP + H(+). It catalyses the reaction L-threonyl-[protein] + ATP = O-phospho-L-threonyl-[protein] + ADP + H(+). Activated by calcium. Upon calcium binding to the EF-hand domains, the C-terminus of the junction domain (J domain) undergoes a conformational change which results in the dissociation of the pseudo-substrate inhibitory motif from the catalytic domain. This, in turn may facilitate the autophosphorylation of the activation loop at Thr-231, which leads to the kinase activation. May be negatively regulated by PKA-mediated phosphorylation. Inhibited by purfalcamine. In terms of biological role, calcium-dependent protein kinase which acts as a sensor and effector of intracellular Ca(2+) levels probably in part downstream of cGMP-activated PKG kinase. By phosphorylating various proteins, required for microneme secretion and thus merozoite egress from and invasion of host erythrocytes. During gametogenesis, essential for the development of both male and female gametes. Phosphorylates SERA5 p50 which enhances SERA5 p50 protease activity; however, SERA5 p50 protease activity has been shown in other studies to be controversial. Probably by phosphorylating SERA5 p50, plays a role in merozoite egress from host erythrocytes. Probably prior or during merozoite invasion of host erythrocytes, phosphorylates rhoptry protein RhopH3 which is required for RhopH3 localization to rhoptries and for its secretion. Probably in late schizonts, phosphorylates myosin A tail domain-interacting protein MTIP and glideosome-associated protein 45 GAP45, both of which are components of the motor complex that generates the force required by the parasite to invade host cells. In late schizonts, phosphorylates inner membrane complex protein IMC1g. In late schizonts, phosphorylates PKA regulatory subunit PKAr in a calcium-dependent manner, which may contribute to the dissociation of regulatory PKAr and catalytic PKAc subunits and promote the activation of PKAc. May phosphorylate raf kinase inhibitory protein RKIP which in turn may regulate CDPK1 catalytic activity. May phosphorylate proteins of the host erythrocyte membranes. The chain is Calcium-dependent protein kinase 1 from Plasmodium falciparum (isolate 3D7).